The following is a 105-amino-acid chain: CRISPR-associated endoribonuclease Cas2 1 (105 aa).

Aspartate 20 contacts Mg(2+).

Belongs to the CRISPR-associated endoribonuclease Cas2 protein family. As to quaternary structure, homodimer, forms a heterotetramer with a Cas1 homodimer. It depends on Mg(2+) as a cofactor.

Functionally, CRISPR (clustered regularly interspaced short palindromic repeat), is an adaptive immune system that provides protection against mobile genetic elements (viruses, transposable elements and conjugative plasmids). CRISPR clusters contain sequences complementary to antecedent mobile elements and target invading nucleic acids. CRISPR clusters are transcribed and processed into CRISPR RNA (crRNA). Functions as a ssRNA-specific endoribonuclease. Involved in the integration of spacer DNA into the CRISPR cassette. The protein is CRISPR-associated endoribonuclease Cas2 1 (cas21) of Nitrosomonas europaea (strain ATCC 19718 / CIP 103999 / KCTC 2705 / NBRC 14298).